A 967-amino-acid chain; its full sequence is Phosphoenolpyruvate carboxylase 1 (967 aa).

Ser-11 carries the phosphoserine modification. Active-site residues include His-173 and Lys-602. At Ser-704 the chain carries Phosphoserine.

The protein belongs to the PEPCase type 1 family. Homotetramer. Mg(2+) serves as cofactor. Mn(2+) is required as a cofactor. The phosphorylation of Ser-11 is reversibly promoted by inorganic phosphate (Pi) deprivation. Enhanced activity by phosphorylation at pH 7.3 by lowering Km and sensitivity to inhibition by L-malate and L-aspartate, while enhancing activation by glucose 6-phosphate. Expressed in all plant organs, with higher levels in roots.

It localises to the cytoplasm. It carries out the reaction oxaloacetate + phosphate = phosphoenolpyruvate + hydrogencarbonate. With respect to regulation, by light-reversible phosphorylation. Activated by inorganic phosphate (Pi) deprivation and glucose 6-phosphate. Inhibited by L-malate and L-aspartate. Its function is as follows. Through the carboxylation of phosphoenolpyruvate (PEP) it forms oxaloacetate, a four-carbon dicarboxylic acid source for the tricarboxylic acid cycle. Contributes probably to the adaptation to inorganic phosphate (Pi) deprivation. This chain is Phosphoenolpyruvate carboxylase 1 (PPC1), found in Arabidopsis thaliana (Mouse-ear cress).